A 371-amino-acid chain; its full sequence is Chaperone protein DnaJ (371 aa).

A J domain is found at 5-69 (DYYEVLGLSK…QKRAQYDQFG (65 aa)). The segment at 133–215 (GKELNVEIPV…CHGSGKVRKR (83 aa)) adopts a CR-type zinc-finger fold. Zn(2+) is bound by residues cysteine 146, cysteine 149, cysteine 163, cysteine 166, cysteine 189, cysteine 192, cysteine 203, and cysteine 206. CXXCXGXG motif repeat units follow at residues 146 to 153 (CDTCKGSG), 163 to 170 (CKHCSGSG), 189 to 196 (CGHCSGTG), and 203 to 210 (CTTCHGSG).

This sequence belongs to the DnaJ family. In terms of assembly, homodimer. Zn(2+) is required as a cofactor.

The protein localises to the cytoplasm. In terms of biological role, participates actively in the response to hyperosmotic and heat shock by preventing the aggregation of stress-denatured proteins and by disaggregating proteins, also in an autonomous, DnaK-independent fashion. Unfolded proteins bind initially to DnaJ; upon interaction with the DnaJ-bound protein, DnaK hydrolyzes its bound ATP, resulting in the formation of a stable complex. GrpE releases ADP from DnaK; ATP binding to DnaK triggers the release of the substrate protein, thus completing the reaction cycle. Several rounds of ATP-dependent interactions between DnaJ, DnaK and GrpE are required for fully efficient folding. Also involved, together with DnaK and GrpE, in the DNA replication of plasmids through activation of initiation proteins. This is Chaperone protein DnaJ from Bacillus cereus (strain ATCC 10987 / NRS 248).